The sequence spans 330 residues: Probable cytosolic iron-sulfur protein assembly protein ciao1-A (330 aa).

7 WD repeats span residues 14–53 (HPDS…WECK), 59–98 (GHQR…FECL), 103–142 (GHEN…EYEC), 148–187 (SHTQ…WECR), 192–231 (GHTS…GGQD), 243–282 (FHGR…DPDQ), and 294–330 (AHSQ…QSEV).

The protein belongs to the WD repeat CIA1 family. Component of the CIA complex.

Functionally, key component of the cytosolic iron-sulfur protein assembly (CIA) complex, a multiprotein complex that mediates the incorporation of iron-sulfur cluster into extramitochondrial Fe/S proteins. This chain is Probable cytosolic iron-sulfur protein assembly protein ciao1-A (ciao1a), found in Salmo salar (Atlantic salmon).